We begin with the raw amino-acid sequence, 304 residues long: UDP-3-O-acyl-N-acetylglucosamine deacetylase (304 aa).

Zn(2+) is bound by residues H79, H238, and D242. H265 serves as the catalytic Proton donor.

Belongs to the LpxC family. It depends on Zn(2+) as a cofactor.

The enzyme catalyses a UDP-3-O-[(3R)-3-hydroxyacyl]-N-acetyl-alpha-D-glucosamine + H2O = a UDP-3-O-[(3R)-3-hydroxyacyl]-alpha-D-glucosamine + acetate. It functions in the pathway glycolipid biosynthesis; lipid IV(A) biosynthesis; lipid IV(A) from (3R)-3-hydroxytetradecanoyl-[acyl-carrier-protein] and UDP-N-acetyl-alpha-D-glucosamine: step 2/6. Its function is as follows. Catalyzes the hydrolysis of UDP-3-O-myristoyl-N-acetylglucosamine to form UDP-3-O-myristoylglucosamine and acetate, the committed step in lipid A biosynthesis. The sequence is that of UDP-3-O-acyl-N-acetylglucosamine deacetylase from Photobacterium profundum (strain SS9).